The sequence spans 282 residues: U1 small nuclear ribonucleoprotein A (282 aa).

Alanine 2 is subject to N-acetylalanine. The 80-residue stretch at 10 to 89 (HTIYINNLNE…KPMRIQYAKT (80 aa)) folds into the RRM 1 domain. Position 60 is an N6-acetyllysine (lysine 60). The tract at residues 101 to 141 (FVERDRKREKRKPKSQETPAAKKAVQGGAAAPVVGTVQGPV) is disordered. The segment covering 119-141 (PAAKKAVQGGAAAPVVGTVQGPV) has biased composition (low complexity). Arginine 152 is subject to Omega-N-methylarginine. An RRM 2 domain is found at 208–282 (HILFLTNLPE…NAMKISFAKK (75 aa)).

It belongs to the RRM U1 A/B'' family. As to quaternary structure, U1 snRNP is composed of the 7 core Sm proteins SNRPB, SNRPD1, SNRPD2, SNRPD3, SNRPE, SNRPF and SNRPG that assemble in a heptameric protein ring on the Sm site of the small nuclear RNA to form the core snRNP, and at least three U1 snRNP-specific proteins SNRNP70/U1-70K, SNRPA/U1-A and SNRPC/U1-C. Interacts with SFPQ; component of a snRNP-free complex with SFPQ.

It is found in the nucleus. Component of the spliceosomal U1 snRNP, which is essential for recognition of the pre-mRNA 5' splice-site and the subsequent assembly of the spliceosome. U1 snRNP is the first snRNP to interact with pre-mRNA. This interaction is required for the subsequent binding of U2 snRNP and the U4/U6/U5 tri-snRNP. SNRPA binds stem loop II of U1 snRNA. In a snRNP-free form (SF-A) may be involved in coupled pre-mRNA splicing and polyadenylation process. May bind preferentially to the 5'-UGCAC-3' motif on RNAs. This Bos taurus (Bovine) protein is U1 small nuclear ribonucleoprotein A (SNRPA).